The chain runs to 358 residues: tRNA-specific 2-thiouridylase MnmA (358 aa).

Residues 6–13 (ALSGGVDS) and M32 each bind ATP. The active-site Nucleophile is the C103. A disulfide bond links C103 and C201. ATP is bound at residue G127. The interval 151–153 (KDQ) is interaction with tRNA. C201 acts as the Cysteine persulfide intermediate in catalysis.

The protein belongs to the MnmA/TRMU family.

Its subcellular location is the cytoplasm. The catalysed reaction is S-sulfanyl-L-cysteinyl-[protein] + uridine(34) in tRNA + AH2 + ATP = 2-thiouridine(34) in tRNA + L-cysteinyl-[protein] + A + AMP + diphosphate + H(+). Its function is as follows. Catalyzes the 2-thiolation of uridine at the wobble position (U34) of tRNA, leading to the formation of s(2)U34. This chain is tRNA-specific 2-thiouridylase MnmA, found in Thermotoga neapolitana (strain ATCC 49049 / DSM 4359 / NBRC 107923 / NS-E).